The chain runs to 234 residues: MRLVQLSRHSIAFPSPEGALREPNGLLALGGDLSPARLLMAYQRGIFPWFSPGDPILWWSPDPRAVLWPESLHISRSMKRFHKRSPYRVTMNYAFGQVIEGCASDREEGTWITRGVVEAYHRLHELGHAHSIEVWREDELVGGMYGVAQGTLFCGESMFSRMENASKTALLVFCEEFIGHGGKLIDCQVLNDHTASLGACEIPRRDYLNYLNQMRLGRLPNNFWVPRCLFSPQE.

It belongs to the L/F-transferase family.

The protein localises to the cytoplasm. It carries out the reaction N-terminal L-lysyl-[protein] + L-leucyl-tRNA(Leu) = N-terminal L-leucyl-L-lysyl-[protein] + tRNA(Leu) + H(+). The catalysed reaction is N-terminal L-arginyl-[protein] + L-leucyl-tRNA(Leu) = N-terminal L-leucyl-L-arginyl-[protein] + tRNA(Leu) + H(+). The enzyme catalyses L-phenylalanyl-tRNA(Phe) + an N-terminal L-alpha-aminoacyl-[protein] = an N-terminal L-phenylalanyl-L-alpha-aminoacyl-[protein] + tRNA(Phe). Functionally, functions in the N-end rule pathway of protein degradation where it conjugates Leu, Phe and, less efficiently, Met from aminoacyl-tRNAs to the N-termini of proteins containing an N-terminal arginine or lysine. The polypeptide is Leucyl/phenylalanyl-tRNA--protein transferase (Shigella boydii serotype 18 (strain CDC 3083-94 / BS512)).